The chain runs to 399 residues: Tyrosine--tRNA ligase (399 aa).

Residues 42 to 51 carry the 'HIGH' region motif; the sequence is PTAPDLHLGH. A 'KMSKS' region motif is present at residues 226–230; it reads KMSKS. Lys-229 is a binding site for ATP. An S4 RNA-binding domain is found at 337–398; sequence LPVFQVVKQA…GKRKFASVVL (62 aa).

Belongs to the class-I aminoacyl-tRNA synthetase family. TyrS type 2 subfamily. As to quaternary structure, homodimer.

Its subcellular location is the cytoplasm. The catalysed reaction is tRNA(Tyr) + L-tyrosine + ATP = L-tyrosyl-tRNA(Tyr) + AMP + diphosphate + H(+). Functionally, catalyzes the attachment of tyrosine to tRNA(Tyr) in a two-step reaction: tyrosine is first activated by ATP to form Tyr-AMP and then transferred to the acceptor end of tRNA(Tyr). The polypeptide is Tyrosine--tRNA ligase (Aromatoleum aromaticum (strain DSM 19018 / LMG 30748 / EbN1) (Azoarcus sp. (strain EbN1))).